The sequence spans 147 residues: MKLVLQRVKEASVSIDGKIAGAINQGLLLLVGVGPDDNAEDLAYAVRKIVNMRIFSDADGKMNQSIQDIKGSILSVSQFTLYADTKKGNRPAFTGAAKPDLARQLYDSFNEQLAEFVPVERGVFGADMQVSLINDGPVTIILDTKCH.

Positions 136–137 (GP) match the Gly-cisPro motif, important for rejection of L-amino acids motif.

It belongs to the DTD family. In terms of assembly, homodimer.

The protein resides in the cytoplasm. The enzyme catalyses glycyl-tRNA(Ala) + H2O = tRNA(Ala) + glycine + H(+). It carries out the reaction a D-aminoacyl-tRNA + H2O = a tRNA + a D-alpha-amino acid + H(+). Functionally, an aminoacyl-tRNA editing enzyme that deacylates mischarged D-aminoacyl-tRNAs. Also deacylates mischarged glycyl-tRNA(Ala), protecting cells against glycine mischarging by AlaRS. Acts via tRNA-based rather than protein-based catalysis; rejects L-amino acids rather than detecting D-amino acids in the active site. By recycling D-aminoacyl-tRNA to D-amino acids and free tRNA molecules, this enzyme counteracts the toxicity associated with the formation of D-aminoacyl-tRNA entities in vivo and helps enforce protein L-homochirality. The sequence is that of D-aminoacyl-tRNA deacylase from Streptococcus pyogenes serotype M6 (strain ATCC BAA-946 / MGAS10394).